The chain runs to 540 residues: Glucose-6-phosphate isomerase (540 aa).

Residue Glu350 is the Proton donor of the active site. Catalysis depends on residues His381 and Lys503.

It belongs to the GPI family.

The protein localises to the cytoplasm. The catalysed reaction is alpha-D-glucose 6-phosphate = beta-D-fructose 6-phosphate. Its pathway is carbohydrate biosynthesis; gluconeogenesis. The protein operates within carbohydrate degradation; glycolysis; D-glyceraldehyde 3-phosphate and glycerone phosphate from D-glucose: step 2/4. In terms of biological role, catalyzes the reversible isomerization of glucose-6-phosphate to fructose-6-phosphate. This is Glucose-6-phosphate isomerase from Burkholderia multivorans (strain ATCC 17616 / 249).